We begin with the raw amino-acid sequence, 778 residues long: Ribosome biogenesis protein BOP1 homolog (778 aa).

Basic residues predominate over residues 1–10 (MAKKQDRKRK). The disordered stretch occupies residues 1–152 (MAKKQDRKRK…DSDTSDEEDI (152 aa)). Composition is skewed to acidic residues over residues 44-53 (EDSTDDEGID), 60-72 (SSEDLEFESDEEG), and 84-105 (SSDEEEVDEEEEDDDDDDDEEE). Positions 114-124 (TTSSKAETNNE) are enriched in polar residues. The segment covering 142-151 (EDSDTSDEED) has biased composition (acidic residues). WD repeat units follow at residues 438–479 (GHTD…RTIE), 481–519 (EDVVRCVAWCPNAKLSIIAVATGSRLLLVNPKVGDKLLI), 564–606 (NHFK…SQIP), 609–647 (KSKGLIQCVLFHPVKPCFFVATQHNIRIYDLVKQELIKK), 650–689 (TNSKWISGMSIHPKGDNLLVSTYDKKMLWFDLDLSTKPYQ), 693–732 (LHRNAVRSVAFHLRYPLFASGSDDQAVIVSHGMVYNDLLQ), and 748–778 (RDDFGVLDVCWHPVQPWVFSTGADCTIRLYT).

The protein belongs to the WD repeat BOP1/ERB1 family.

It localises to the nucleus. The protein resides in the nucleolus. The protein localises to the nucleoplasm. Required for maturation of ribosomal RNAs and formation of the large ribosomal subunit. This chain is Ribosome biogenesis protein BOP1 homolog, found in Drosophila willistoni (Fruit fly).